The sequence spans 339 residues: MARIIALDGAQGEGGGQILRSALSLSMITGQPFEMSGIRAGRAKPGLLRQHLTAVRAATEICGAQVNGDELGSQQLRFTPGPIRGGEYRFAIGSAGSCMLVLQTVLPALWFADGSSRVEVHGGTHNQAAPSADFICRVWEPLLARMGISQRTTLIKHGFYPAGGGAAATVVEPAASLRGLTLISRGETLRTTAEALLAAVPYHVGEREVATLEAHFPQAEKNVVALEGGCGPGNALSLMIQSEQLTELFAAFGVKGTSAEAVANQVAHEARRYLASPAAVGEHLADQLILPLALAGEGAFTVARASAHLLTNIAVVERFLPVRFSCEATESGYLVRVSD.

Residues Gln103 and 283–287 (HLADQ) contribute to the ATP site. His308 acts as the Tele-AMP-histidine intermediate in catalysis.

It belongs to the RNA 3'-terminal cyclase family. Type 1 subfamily.

The protein resides in the cytoplasm. The catalysed reaction is a 3'-end 3'-phospho-ribonucleotide-RNA + ATP = a 3'-end 2',3'-cyclophospho-ribonucleotide-RNA + AMP + diphosphate. Catalyzes the conversion of 3'-phosphate to a 2',3'-cyclic phosphodiester at the end of RNA. The mechanism of action of the enzyme occurs in 3 steps: (A) adenylation of the enzyme by ATP; (B) transfer of adenylate to an RNA-N3'P to produce RNA-N3'PP5'A; (C) and attack of the adjacent 2'-hydroxyl on the 3'-phosphorus in the diester linkage to produce the cyclic end product. The biological role of this enzyme is unknown but it is likely to function in some aspects of cellular RNA processing. This chain is RNA 3'-terminal phosphate cyclase, found in Salmonella typhimurium (strain LT2 / SGSC1412 / ATCC 700720).